The following is a 69-amino-acid chain: DNA-directed RNA polymerase subunit epsilon (69 aa).

The protein belongs to the RNA polymerase subunit epsilon family. RNAP is composed of a core of 2 alpha, a beta and a beta' subunit. The core is associated with a delta subunit, and at least one of epsilon or omega. When a sigma factor is associated with the core the holoenzyme is formed, which can initiate transcription.

It catalyses the reaction RNA(n) + a ribonucleoside 5'-triphosphate = RNA(n+1) + diphosphate. Functionally, a non-essential component of RNA polymerase (RNAP). The sequence is that of DNA-directed RNA polymerase subunit epsilon from Halalkalibacterium halodurans (strain ATCC BAA-125 / DSM 18197 / FERM 7344 / JCM 9153 / C-125) (Bacillus halodurans).